A 342-amino-acid polypeptide reads, in one-letter code: Phosphoribosylformylglycinamidine cyclo-ligase (342 aa).

It belongs to the AIR synthase family.

The protein localises to the cytoplasm. It carries out the reaction 2-formamido-N(1)-(5-O-phospho-beta-D-ribosyl)acetamidine + ATP = 5-amino-1-(5-phospho-beta-D-ribosyl)imidazole + ADP + phosphate + H(+). It functions in the pathway purine metabolism; IMP biosynthesis via de novo pathway; 5-amino-1-(5-phospho-D-ribosyl)imidazole from N(2)-formyl-N(1)-(5-phospho-D-ribosyl)glycinamide: step 2/2. The polypeptide is Phosphoribosylformylglycinamidine cyclo-ligase (Latilactobacillus sakei subsp. sakei (strain 23K) (Lactobacillus sakei subsp. sakei)).